We begin with the raw amino-acid sequence, 235 residues long: Purine nucleoside phosphorylase DeoD-type (235 aa).

An a purine D-ribonucleoside-binding site is contributed by His-4. Phosphate contacts are provided by residues Gly-20, Arg-24, Arg-43, and 87 to 90; that span reads RVGT. A purine D-ribonucleoside-binding positions include Glu-162, 179-181, and 203-204; these read EME and SD. The Proton donor role is filled by Asp-204.

Belongs to the PNP/UDP phosphorylase family. As to quaternary structure, homohexamer; trimer of homodimers.

The catalysed reaction is a purine D-ribonucleoside + phosphate = a purine nucleobase + alpha-D-ribose 1-phosphate. It carries out the reaction a purine 2'-deoxy-D-ribonucleoside + phosphate = a purine nucleobase + 2-deoxy-alpha-D-ribose 1-phosphate. In terms of biological role, catalyzes the reversible phosphorolytic breakdown of the N-glycosidic bond in the beta-(deoxy)ribonucleoside molecules, with the formation of the corresponding free purine bases and pentose-1-phosphate. The protein is Purine nucleoside phosphorylase DeoD-type of Bacillus cytotoxicus (strain DSM 22905 / CIP 110041 / 391-98 / NVH 391-98).